A 193-amino-acid chain; its full sequence is Cysteine and glycine-rich protein 1 (193 aa).

The region spanning 10 to 61 (CGVCQKTVYFAEEVQCEGNSFHKSCFLCMVCKKNLDSTTVAVHGEEIYCKSC) is the LIM zinc-binding 1 domain. The Nuclear localization signal motif lies at 64 to 69 (KKYGPK). Serine 81 carries the phosphoserine modification. The residue at position 84 (lysine 84) is an N6-acetyllysine. Lysine 91 is covalently cross-linked (Glycyl lysine isopeptide (Lys-Gly) (interchain with G-Cter in SUMO2)). An N6-acetyllysine mark is found at lysine 112, lysine 131, lysine 137, and lysine 161. One can recognise an LIM zinc-binding 2 domain in the interval 119–170 (CPRCSQAVYAAEKVIGAGKSWHKSCFRCAKCGKGLESTTLADKDGEIYCKGC). Serine 192 carries the phosphoserine modification.

Interacts with ASCC1; ASCC2 and TRIP4.

The protein resides in the nucleus. Could play a role in neuronal development. The protein is Cysteine and glycine-rich protein 1 (Csrp1) of Rattus norvegicus (Rat).